The sequence spans 180 residues: Small ribosomal subunit protein uS4 (180 aa).

The region spanning 103–165 (RRLQTIVYRK…KGSPFAKEGH (63 aa)) is the S4 RNA-binding domain.

This sequence belongs to the universal ribosomal protein uS4 family. Part of the 30S ribosomal subunit. Contacts protein S5. The interaction surface between S4 and S5 is involved in control of translational fidelity.

One of the primary rRNA binding proteins, it binds directly to 16S rRNA where it nucleates assembly of the body of the 30S subunit. Functionally, with S5 and S12 plays an important role in translational accuracy. This chain is Small ribosomal subunit protein uS4, found in Thermococcus kodakarensis (strain ATCC BAA-918 / JCM 12380 / KOD1) (Pyrococcus kodakaraensis (strain KOD1)).